The chain runs to 229 residues: Ribosome maturation factor RimM (229 aa).

The disordered stretch occupies residues Met1–Ala37. Residues Ala148–Tyr229 form the PRC barrel domain.

It belongs to the RimM family. As to quaternary structure, binds ribosomal protein uS19.

Its subcellular location is the cytoplasm. An accessory protein needed during the final step in the assembly of 30S ribosomal subunit, possibly for assembly of the head region. Essential for efficient processing of 16S rRNA. May be needed both before and after RbfA during the maturation of 16S rRNA. It has affinity for free ribosomal 30S subunits but not for 70S ribosomes. The polypeptide is Ribosome maturation factor RimM (Burkholderia pseudomallei (strain 668)).